Consider the following 506-residue polypeptide: Galactose/methyl galactoside import ATP-binding protein MglA (506 aa).

ABC transporter domains lie at 14–249 and 264–506; these read LTMT…VGRE and VILE…AKYL. 46 to 53 lines the ATP pocket; the sequence is GENGAGKS.

This sequence belongs to the ABC transporter superfamily. Galactose/methyl galactoside importer (TC 3.A.1.2.3) family. In terms of assembly, the complex is composed of one ATP-binding protein (MglA), two transmembrane proteins (MglC) and a solute-binding protein (MglB).

The protein localises to the cell inner membrane. The catalysed reaction is D-galactose(out) + ATP + H2O = D-galactose(in) + ADP + phosphate + H(+). It carries out the reaction methyl beta-D-galactoside(out) + ATP + H2O = methyl beta-D-galactoside(in) + ADP + phosphate + H(+). Its function is as follows. Part of the ABC transporter complex MglABC involved in galactose/methyl galactoside import. Responsible for energy coupling to the transport system. This chain is Galactose/methyl galactoside import ATP-binding protein MglA, found in Mannheimia succiniciproducens (strain KCTC 0769BP / MBEL55E).